The following is a 332-amino-acid chain: Ferredoxin--NADP reductase (332 aa).

Residues Asp-33, Gln-41, Tyr-46, Ala-86, Ile-121, Asp-282, and Ser-325 each coordinate FAD.

Belongs to the ferredoxin--NADP reductase type 2 family. In terms of assembly, homodimer. The cofactor is FAD.

It catalyses the reaction 2 reduced [2Fe-2S]-[ferredoxin] + NADP(+) + H(+) = 2 oxidized [2Fe-2S]-[ferredoxin] + NADPH. The protein is Ferredoxin--NADP reductase of Metallosphaera sedula (strain ATCC 51363 / DSM 5348 / JCM 9185 / NBRC 15509 / TH2).